A 170-amino-acid polypeptide reads, in one-letter code: Large ribosomal subunit protein uL5 (170 aa).

This sequence belongs to the universal ribosomal protein uL5 family. As to quaternary structure, part of the 50S ribosomal subunit; contacts the 5S rRNA and probably tRNA. Forms a bridge to the 30S subunit in the 70S ribosome.

Its function is as follows. This is one of the proteins that bind and probably mediate the attachment of the 5S RNA into the large ribosomal subunit, where it forms part of the central protuberance. In the 70S ribosome it contacts protein S13 of the 30S subunit (bridge B1b), connecting the 2 subunits; this bridge is implicated in subunit movement. May contact the P site tRNA; the 5S rRNA and some of its associated proteins might help stabilize positioning of ribosome-bound tRNAs. The chain is Large ribosomal subunit protein uL5 from Methanobrevibacter smithii (strain ATCC 35061 / DSM 861 / OCM 144 / PS).